Here is a 205-residue protein sequence, read N- to C-terminus: Inactive ribonuclease-like protein 9 (205 aa).

A signal peptide spans 1–26 (MMRTLITTHPLPLLLLPQQLLQLVQF). 2 disulfides stabilise this stretch: Cys-116–Cys-168 and Cys-123–Cys-130. Asn-131 and Asn-143 each carry an N-linked (GlcNAc...) asparagine glycan.

This sequence belongs to the pancreatic ribonuclease family. In terms of tissue distribution, at the mRNA level, widely expressed. At protein level, restricted to epididymis. Expressed in spermatozoa (sperm head and neck), with higher levels on ejaculated and epididymal sperm than on testicular sperm (at protein level). Expressed in the epithelial cells of the epididymal tubule (at protein level). Not detected in muscle.

The protein localises to the secreted. Does not exhibit any ribonuclease activity. The protein is Inactive ribonuclease-like protein 9 (RNASE9) of Homo sapiens (Human).